We begin with the raw amino-acid sequence, 246 residues long: UPF0736 protein GK0808 (246 aa).

This sequence belongs to the UPF0736 family.

The sequence is that of UPF0736 protein GK0808 from Geobacillus kaustophilus (strain HTA426).